The chain runs to 137 residues: ATP synthase epsilon chain (137 aa).

The protein belongs to the ATPase epsilon chain family. In terms of assembly, F-type ATPases have 2 components, CF(1) - the catalytic core - and CF(0) - the membrane proton channel. CF(1) has five subunits: alpha(3), beta(3), gamma(1), delta(1), epsilon(1). CF(0) has three main subunits: a, b and c.

The protein localises to the cellular thylakoid membrane. In terms of biological role, produces ATP from ADP in the presence of a proton gradient across the membrane. This Nostoc sp. (strain PCC 7120 / SAG 25.82 / UTEX 2576) protein is ATP synthase epsilon chain (atpC).